Consider the following 269-residue polypeptide: Phosphonates import ATP-binding protein PhnC (269 aa).

The ABC transporter domain occupies 2–245 (LVVEGLTCRF…VARELYDLEA (244 aa)). An ATP-binding site is contributed by 34–41 (GRSGAGKS).

The protein belongs to the ABC transporter superfamily. Phosphonates importer (TC 3.A.1.9.1) family. As to quaternary structure, the complex is composed of two ATP-binding proteins (PhnC), two transmembrane proteins (PhnE) and a solute-binding protein (PhnD).

The protein resides in the cell inner membrane. It catalyses the reaction phosphonate(out) + ATP + H2O = phosphonate(in) + ADP + phosphate + H(+). Its function is as follows. Part of the ABC transporter complex PhnCDE involved in phosphonates import. Responsible for energy coupling to the transport system. The polypeptide is Phosphonates import ATP-binding protein PhnC (Bradyrhizobium diazoefficiens (strain JCM 10833 / BCRC 13528 / IAM 13628 / NBRC 14792 / USDA 110)).